The primary structure comprises 352 residues: N-acetyl-gamma-glutamyl-phosphate reductase (352 aa).

The active site involves cysteine 156.

The protein belongs to the NAGSA dehydrogenase family. Type 1 subfamily.

It localises to the cytoplasm. It catalyses the reaction N-acetyl-L-glutamate 5-semialdehyde + phosphate + NADP(+) = N-acetyl-L-glutamyl 5-phosphate + NADPH + H(+). Its pathway is amino-acid biosynthesis; L-arginine biosynthesis; N(2)-acetyl-L-ornithine from L-glutamate: step 3/4. Functionally, catalyzes the NADPH-dependent reduction of N-acetyl-5-glutamyl phosphate to yield N-acetyl-L-glutamate 5-semialdehyde. This chain is N-acetyl-gamma-glutamyl-phosphate reductase, found in Afipia carboxidovorans (strain ATCC 49405 / DSM 1227 / KCTC 32145 / OM5) (Oligotropha carboxidovorans).